The chain runs to 591 residues: Aspartate--tRNA(Asp/Asn) ligase (591 aa).

Glutamate 176 serves as a coordination point for L-aspartate. The interval glutamine 200–lysine 203 is aspartate. Residue arginine 222 coordinates L-aspartate. ATP-binding positions include arginine 222–glutamate 224 and glutamine 231. Residue histidine 450 participates in L-aspartate binding. Residue glutamate 484 participates in ATP binding. L-aspartate is bound at residue arginine 491. ATP is bound at residue glycine 536–arginine 539.

This sequence belongs to the class-II aminoacyl-tRNA synthetase family. Type 1 subfamily. In terms of assembly, homodimer.

Its subcellular location is the cytoplasm. The catalysed reaction is tRNA(Asx) + L-aspartate + ATP = L-aspartyl-tRNA(Asx) + AMP + diphosphate. Its function is as follows. Aspartyl-tRNA synthetase with relaxed tRNA specificity since it is able to aspartylate not only its cognate tRNA(Asp) but also tRNA(Asn). Reaction proceeds in two steps: L-aspartate is first activated by ATP to form Asp-AMP and then transferred to the acceptor end of tRNA(Asp/Asn). The sequence is that of Aspartate--tRNA(Asp/Asn) ligase from Bacillus cereus (strain ATCC 14579 / DSM 31 / CCUG 7414 / JCM 2152 / NBRC 15305 / NCIMB 9373 / NCTC 2599 / NRRL B-3711).